A 785-amino-acid polypeptide reads, in one-letter code: MSDQDHSMDEMTAVVKIEKGVGGNNGGNGNGGGAFSQARSSSTGSSSSTGGGGQESQPSPLALLAATCSRIESPNENSNNSQGPSQSGGTGELDLTATQLSQGANGWQIISSSSGATPTSKEQSGSSTNGSNGSESSKNRTVSGGQYVVAAAPNLQNQQVLTGLPGVMPNIQYQVIPQFQTVDGQQLQFAATGAQVQQDGSGQIQIIPGANQQIITNRGSGGNIIAAMPNLLQQAVPLQGLANNVLSGQTQYVTNVPVALNGNITLLPVNSVSAATLTPSSQAVTISSSGSQESGSQPVTSGTTISSASLVSSQASSSSFFTNANSYSTTTTTSNMGIMNFTTSGSSGTNSQGQTPQRVSGLQGSDALNIQQNQTSGGSLQAGQQKEGEQNQQTQQQQILIQPQLVQGGQALQALQAAPLSGQTFTTQAISQETLQNLQLQAVPNSGPIIIRTPTVGPNGQVSWQTLQLQNLQVQNPQAQTITLAPMQGVSLGQTSSSNTTLTPIASAASIPAGTVTVNAAQLSSMPGLQTINLSALGTSGIQVHPIQGLPLAIANAPGDHGAQLGLHGAGGDGIHDDTAGGEEGENSPDAQPQAGRRTRREACTCPYCKDSEGRGSGDPGKKKQHICHIQGCGKVYGKTSHLRAHLRWHTGERPFMCTWSYCGKRFTRSDELQRHKRTHTGEKKFACPECPKRFMRSDHLSKHIKTHQNKKGGPGVALSVGTLPLDSGAGSEGSGTATPSALITTNMVAMEAICPEGIARLANSGINVMQVADLQSINISGNGF.

The segment at 1–93 (MSDQDHSMDE…PSQSGGTGEL (93 aa)) is disordered. An N-acetylserine modification is found at serine 2. 2 positions are modified to phosphoserine: serine 2 and serine 7. The repressor domain stretch occupies residues 2–82 (SDQDHSMDEM…SPNENSNNSQ (81 aa)). Lysine 16 participates in a covalent cross-link: Glycyl lysine isopeptide (Lys-Gly) (interchain with G-Cter in SUMO); alternate. Lysine 16 is covalently cross-linked (Glycyl lysine isopeptide (Lys-Gly) (interchain with G-Cter in SUMO2); alternate). Positions 20-34 (GVGGNNGGNGNGGGA) are enriched in gly residues. Residue serine 59 is modified to Phosphoserine. Over residues 72–85 (ESPNENSNNSQGPS) the composition is skewed to low complexity. A Phosphoserine; by ATM modification is found at serine 101. Over residues 109 to 123 (IISSSSGATPTSKEQ) the composition is skewed to polar residues. The segment at 109 to 141 (IISSSSGATPTSKEQSGSSTNGSNGSESSKNRT) is disordered. Over residues 124–136 (SGSSTNGSNGSES) the composition is skewed to low complexity. The interval 146–251 (QYVVAAAPNL…ANNVLSGQTQ (106 aa)) is transactivation domain A (Gln-rich). The interval 261–495 (NGNITLLPVN…PMQGVSLGQT (235 aa)) is transactivation domain B (Gln-rich). A Phosphothreonine; by MAPK8 modification is found at threonine 278. Positions 329–395 (TTTTTSNMGI…KEGEQNQQTQ (67 aa)) are disordered. Residues 342–357 (TTSGSSGTNSQGQTPQ) show a composition bias toward low complexity. Residues 358-379 (RVSGLQGSDALNIQQNQTSGGS) are compositionally biased toward polar residues. A compositionally biased stretch (low complexity) spans 381–395 (QAGQQKEGEQNQQTQ). Position 453 is a phosphothreonine; by MAPK1 and MAPK3 (threonine 453). The short motif at 462–470 (VSWQTLQLQ) is the 9aaTAD element. A glycan (O-linked (GlcNAc) serine) is linked at serine 491. The segment at 496 to 610 (SSSNTTLTPI…REACTCPYCK (115 aa)) is transactivation domain C (highly charged). Residues 567–598 (LHGAGGDGIHDDTAGGEEGENSPDAQPQAGRR) form a disordered region. Serine 612 bears the Phosphoserine; alternate mark. An O-linked (GlcNAc) serine; alternate glycan is attached at serine 612. The segment at 619–785 (DPGKKKQHIC…QSINISGNGF (167 aa)) is VZV IE62-binding. A C2H2-type 1 zinc finger spans residues 626–650 (HICHIQGCGKVYGKTSHLRAHLRWH). Threonine 640 bears the Phosphothreonine; alternate mark. O-linked (GlcNAc) threonine; alternate glycosylation is present at threonine 640. Residue serine 641 is glycosylated (O-linked (GlcNAc) serine; alternate). Position 641 is a phosphoserine; by PKC/PRKCZ; alternate (serine 641). Threonine 651 carries the phosphothreonine; by PKC/PRKCZ modification. The C2H2-type 2 zinc finger occupies 656 to 680 (FMCTWSYCGKRFTRSDELQRHKRTH). Threonine 668 is modified (phosphothreonine). The residue at position 670 (serine 670) is a Phosphoserine; by PKC/PRKCZ. Threonine 681 carries the post-translational modification Phosphothreonine; by PKC/PRKCZ. The segment at 686–708 (FACPECPKRFMRSDHLSKHIKTH) adopts a C2H2-type 3 zinc-finger fold. Residues serine 698 and serine 702 each carry the phosphoserine; alternate modification. Serine 698 and serine 702 each carry an O-linked (GlcNAc) serine; alternate glycan. Lysine 703 carries the N6-acetyllysine modification. Positions 708–785 (HQNKKGGPGV…QSINISGNGF (78 aa)) are domain D. Phosphothreonine; by MAPK1, MAPK3 and MAPK8 is present on threonine 739.

Belongs to the Sp1 C2H2-type zinc-finger protein family. In terms of assembly, interacts with ATF7IP, ATF7IP2, BAHD1, POGZ, HCFC1, AATF and PHC2. Interacts with HLTF; the interaction may be required for basal transcriptional activity of HLTF. Interacts (deacetylated form) with EP300; the interaction enhances gene expression. Interacts with HDAC1 and JUN. Interacts with ELF1; the interaction is inhibited by glycosylation of SP1. Interaction with NFYA; the interaction is inhibited by glycosylation of SP1. Interacts with ATF7IP and TBP. Interacts with MEIS2 isoform 4 and PBX1 isoform PBX1a. Interacts with EGR1. Interacts with SMARCA4/BRG1. Interacts with RNF112 in an oxidative stress-regulated manner. Interacts with ZBTB7A; ZBTB7A prevents the binding to GC-rich motifs in promoters and represses the transcriptional activity of SP1. Interacts with DDX3X; this interaction potentiates SP1-induced CDKN1A/WAF1/CIP1 transcription. Interacts with MSX1; the interaction may inhibit MSX1 autoinactivation. As to quaternary structure, (Microbial infection) Interacts with varicella-zoster virus IE62 protein. (Microbial infection) Interacts with SV40 VP2/3 proteins. Interacts with SV40 major capsid protein VP1; this interaction leads to a cooperativity between the 2 proteins in DNA binding. In terms of assembly, (Microbial infection) Interacts with HIV-1 Vpr; the interaction is inhibited by SP1 O-glycosylation. Phosphorylated on multiple serine and threonine residues. Phosphorylation is coupled to ubiquitination, sumoylation and proteolytic processing. Phosphorylation on Ser-59 enhances proteolytic cleavage. Phosphorylation on Ser-7 enhances ubiquitination and protein degradation. Hyperphosphorylation on Ser-101 in response to DNA damage has no effect on transcriptional activity. MAPK1/MAPK3-mediated phosphorylation on Thr-453 and Thr-739 enhances VEGF transcription but, represses FGF2-triggered PDGFR-alpha transcription. Also implicated in the repression of RECK by ERBB2. Hyperphosphorylated on Thr-278 and Thr-739 during mitosis by MAPK8 shielding SP1 from degradation by the ubiquitin-dependent pathway. Phosphorylated in the zinc-finger domain by calmodulin-activated PKCzeta. Phosphorylation on Ser-641 by PKCzeta is critical for TSA-activated LHR gene expression through release of its repressor, p107. Phosphorylation on Thr-668, Ser-670 and Thr-681 is stimulated by angiotensin II via the AT1 receptor inducing increased binding to the PDGF-D promoter. This phosphorylation is increased in injured artey wall. Ser-59 and Thr-681 can both be dephosphorylated by PP2A during cell-cycle interphase. Dephosphorylation on Ser-59 leads to increased chromatin association during interphase and increases the transcriptional activity. On insulin stimulation, sequentially glycosylated and phosphorylated on several C-terminal serine and threonine residues. In terms of processing, acetylated. Acetylation/deacetylation events affect transcriptional activity. Deacetylation leads to an increase in the expression of the 12(s)-lipooxygenase gene through recruitment of p300 to the promoter. Deacetylated by HDAC6 which leads to increased expression of ENG and positive regulation of angiogenesis. Post-translationally, ubiquitinated. Ubiquitination occurs on the C-terminal proteolytically-cleaved peptide and is triggered by phosphorylation. Sumoylated with SUMO1. Sumoylation modulates proteolytic cleavage of the N-terminal repressor domain. Sumoylation levels are attenuated during tumorigenesis. Phosphorylation mediates SP1 desumoylation. In terms of processing, proteolytic cleavage in the N-terminal repressor domain is prevented by sumoylation. The C-terminal cleaved product is susceptible to degradation. Post-translationally, O-glycosylated; Contains 8 N-acetylglucosamine side chains. Levels are controlled by insulin and the SP1 phosphorylation states. Insulin-mediated O-glycosylation locates SP1 to the nucleus, where it is sequentially deglycosylated and phosphorylated. O-glycosylation affects transcriptional activity through disrupting the interaction with a number of transcription factors including ELF1 and NFYA. Also inhibits interaction with the HIV1 promoter. Inhibited by peroxisomome proliferator receptor gamma (PPARgamma). As to expression, up-regulated in adenocarcinomas of the stomach (at protein level). Isoform 3 is ubiquitously expressed at low levels.

It localises to the nucleus. The protein resides in the cytoplasm. In terms of biological role, transcription factor that can activate or repress transcription in response to physiological and pathological stimuli. Binds with high affinity to GC-rich motifs and regulates the expression of a large number of genes involved in a variety of processes such as cell growth, apoptosis, differentiation and immune responses. Highly regulated by post-translational modifications (phosphorylations, sumoylation, proteolytic cleavage, glycosylation and acetylation). Also binds the PDGFR-alpha G-box promoter. May have a role in modulating the cellular response to DNA damage. Implicated in chromatin remodeling. Plays an essential role in the regulation of FE65 gene expression. In complex with ATF7IP, maintains telomerase activity in cancer cells by inducing TERT and TERC gene expression. Isoform 3 is a stronger activator of transcription than isoform 1. Positively regulates the transcription of the core clock component BMAL1. Plays a role in the recruitment of SMARCA4/BRG1 on the c-FOS promoter. Plays a role in protecting cells against oxidative stress following brain injury by regulating the expression of RNF112. The polypeptide is Transcription factor Sp1 (SP1) (Homo sapiens (Human)).